The following is an 804-amino-acid chain: MAPANAPRNGKYAKSSQRTLKRKRVQEDLSSLVQRVEDLDLKESFKAFTDLPLSEPTLSGLSASHYKTLTDIQSRAVSHALKGRDILGAAKTGSGKTLAFLIPVLENLYRKQWAEHDGLGALILSPTRELAIQIFEVLRKVGRYHHFSAGLVIGGKSLKEEQERLGKMNILVCTPGRMLQHLDQTALFDTYNLQMLVLDEADRIMDMGFQKTVDAIIGHLPKERQTMLFSATQTKKVSDLARLSLQDPEYVAVHEAAASATPSTLQQHYVVTPLPQKLDILWSFIRSNLKSKTIVFLSSGKQVRFVYEAFRHLQPGIPLMHLHGRQKQGGRLDITTKYSQAKHAVLFSTDVAARGLDFPAVDWVIQLDCPEDADTYIHRVGRTARYERDGRAVLFLDPSEEQGMLKRLEQKKVPVEKINVKANKQQSIKNQLQNMCFKDPELKYLGQKAFISYVKSVYVQKDKEIFKLKDLDLEEFASSLGLPGAPRIKFIKGDDTKERKNAPRAVAHLSSDDDESDAEDDEKKSKKKDAPQVRTKYDRMFERRNQDVLAGHYTKLINDDGTLADPKATDEADEDNDFLSVKRRFDAGDKQLEVGGSSDESGSDSEAETGKKDVKVVNIDGKEPLVIDSKRREKLLKSKKKLLKFKGKGTKLIYDDEGNAHEIYEMEDEEQFRAKGDAKEQQARFLAAEAERTRLADVEDKELVKQKRREKKEKRKARERELLAQEEQEEMLVQLPPPEDDDQGRFSPSEDEAPRPSKKQRVQFAEPAESEEERRPKKPKKSTAEPKEIQTLEDLESLATGLLG.

Positions 1–24 (MAPANAPRNGKYAKSSQRTLKRKR) are disordered. The Q motif signature appears at 46–74 (KAFTDLPLSEPTLSGLSASHYKTLTDIQS). Residues 77–251 (VSHALKGRDI…RLSLQDPEYV (175 aa)) form the Helicase ATP-binding domain. An ATP-binding site is contributed by 90–97 (AKTGSGKT). The DEAD box motif lies at 199 to 202 (DEAD). In terms of domain architecture, Helicase C-terminal spans 277-436 (KLDILWSFIR…SIKNQLQNMC (160 aa)). Disordered regions lie at residues 493–541 (GDDT…DRMF), 589–615 (DKQL…KDVK), and 695–804 (LADV…GLLG). The segment covering 521-541 (DEKKSKKKDAPQVRTKYDRMF) has biased composition (basic and acidic residues). Residues 695–705 (LADVEDKELVK) are compositionally biased toward basic and acidic residues. Over residues 706-715 (QKRREKKEKR) the composition is skewed to basic residues.

This sequence belongs to the DEAD box helicase family. DDX10/DBP4 subfamily. In terms of assembly, interacts with the U3 and U14 snoRNAs. Associates with pre-ribosomal complexes.

It is found in the nucleus. It localises to the nucleolus. The catalysed reaction is ATP + H2O = ADP + phosphate + H(+). In terms of biological role, ATP-dependent RNA helicase required for ribosome biogenesis. Involved in the release of U14 snoRNA in pre-ribosomal complexes. Required for pre-rRNA cleavage at site A2. The protein is ATP-dependent RNA helicase dbp4 (dbp4) of Aspergillus terreus (strain NIH 2624 / FGSC A1156).